Here is a 184-residue protein sequence, read N- to C-terminus: MTSQVAAAEVAQPYAQALLSIAQSKNLTEEFGEDARTFLGLLRADKQLHNFFSNPFIQAENKKALIKQILGEGSNPYLRNFLLILVDKRRIAFLESIFQQYLALLRQLNQTVLAEVISAVPLTEAQQQAIIQKVIAISNARQVELETKVDSELIGGVIIKVGSQVIDASIRGQLRRLSLRLTNS.

The protein belongs to the ATPase delta chain family. F-type ATPases have 2 components, F(1) - the catalytic core - and F(0) - the membrane proton channel. F(1) has five subunits: alpha(3), beta(3), gamma(1), delta(1), epsilon(1). CF(0) has four main subunits: a(1), b(1), b'(1) and c(10-14). The alpha and beta chains form an alternating ring which encloses part of the gamma chain. F(1) is attached to F(0) by a central stalk formed by the gamma and epsilon chains, while a peripheral stalk is formed by the delta, b and b' chains.

The protein localises to the cellular thylakoid membrane. Its function is as follows. F(1)F(0) ATP synthase produces ATP from ADP in the presence of a proton or sodium gradient. F-type ATPases consist of two structural domains, F(1) containing the extramembraneous catalytic core and F(0) containing the membrane proton channel, linked together by a central stalk and a peripheral stalk. During catalysis, ATP synthesis in the catalytic domain of F(1) is coupled via a rotary mechanism of the central stalk subunits to proton translocation. This protein is part of the stalk that links CF(0) to CF(1). It either transmits conformational changes from CF(0) to CF(1) or is implicated in proton conduction. The sequence is that of ATP synthase subunit delta from Nostoc punctiforme (strain ATCC 29133 / PCC 73102).